The following is a 311-amino-acid chain: Nudix hydrolase 9 (311 aa).

Residues 131–298 enclose the Nudix hydrolase domain; the sequence is SSPLGNGAVI…GFALYELMLQ (168 aa). Positions 192–213 match the Nudix box motif; sequence LNKKVTQEMFDSIICEVVEETG. 2 residues coordinate Mg(2+): Glu207 and Glu211.

This sequence belongs to the Nudix hydrolase family. The cofactor is Mg(2+). Mn(2+) serves as cofactor. In terms of tissue distribution, expressed in roots, stems and leaves.

Probably mediates the hydrolysis of some nucleoside diphosphate derivatives. This Arabidopsis thaliana (Mouse-ear cress) protein is Nudix hydrolase 9 (NUDT9).